A 244-amino-acid chain; its full sequence is Phosphoadenosine 5'-phosphosulfate reductase (244 aa).

The active-site Nucleophile; cysteine thiosulfonate intermediate is Cys239.

It belongs to the PAPS reductase family. CysH subfamily.

The protein resides in the cytoplasm. It carries out the reaction [thioredoxin]-disulfide + sulfite + adenosine 3',5'-bisphosphate + 2 H(+) = [thioredoxin]-dithiol + 3'-phosphoadenylyl sulfate. It functions in the pathway sulfur metabolism; hydrogen sulfide biosynthesis; sulfite from sulfate: step 3/3. Functionally, catalyzes the formation of sulfite from phosphoadenosine 5'-phosphosulfate (PAPS) using thioredoxin as an electron donor. This Serratia proteamaculans (strain 568) protein is Phosphoadenosine 5'-phosphosulfate reductase.